Consider the following 76-residue polypeptide: Small ribosomal subunit protein bS16 (76 aa).

The protein belongs to the bacterial ribosomal protein bS16 family.

The chain is Small ribosomal subunit protein bS16 from Helicobacter pylori (strain P12).